The chain runs to 259 residues: Ribosomal RNA small subunit methyltransferase J (259 aa).

S-adenosyl-L-methionine contacts are provided by residues 101-102, 117-118, 153-154, and Asp-176; these read RD, ER, and SS.

Belongs to the methyltransferase superfamily. RsmJ family.

Its subcellular location is the cytoplasm. The catalysed reaction is guanosine(1516) in 16S rRNA + S-adenosyl-L-methionine = N(2)-methylguanosine(1516) in 16S rRNA + S-adenosyl-L-homocysteine + H(+). In terms of biological role, specifically methylates the guanosine in position 1516 of 16S rRNA. This is Ribosomal RNA small subunit methyltransferase J from Vibrio vulnificus (strain YJ016).